The chain runs to 528 residues: Na(+)/H(+) antiporter NhaB (528 aa).

Helical transmembrane passes span Ile10–Ile30, Tyr63–Ala83, Val96–Phe116, Val131–Ile165, Leu204–Pro224, Phe240–Leu260, Val305–Val325, Leu359–Ile379, Leu391–Gly411, Ala449–Ile469, and Met476–Glu496.

This sequence belongs to the NhaB Na(+)/H(+) (TC 2.A.34) antiporter family.

It is found in the cell inner membrane. The enzyme catalyses 2 Na(+)(in) + 3 H(+)(out) = 2 Na(+)(out) + 3 H(+)(in). Functionally, na(+)/H(+) antiporter that extrudes sodium in exchange for external protons. The chain is Na(+)/H(+) antiporter NhaB from Shewanella sp. (strain W3-18-1).